The chain runs to 349 residues: Leucine-rich repeat-containing protein 58 (349 aa).

10 LRR repeats span residues 14 to 34 (NLTH…NKRK), 35 to 56 (DVQQ…VNSF), 58 to 80 (HLHL…LGLT), 81 to 102 (KLKT…KELG), 105 to 125 (RLEV…QFLQ), 128 to 149 (TLKS…IENL), 151 to 173 (SLEF…ANLP), 174 to 195 (YLSY…LAQV), 197 to 217 (SLRS…ILSL), and 219 to 239 (QLQE…RDLT).

The polypeptide is Leucine-rich repeat-containing protein 58 (lrrc58) (Xenopus tropicalis (Western clawed frog)).